The chain runs to 179 residues: Large ribosomal subunit protein uL5 (179 aa).

Belongs to the universal ribosomal protein uL5 family. In terms of assembly, part of the 50S ribosomal subunit; part of the 5S rRNA/L5/L18/L25 subcomplex. Contacts the 5S rRNA and the P site tRNA. Forms a bridge to the 30S subunit in the 70S ribosome.

This is one of the proteins that bind and probably mediate the attachment of the 5S RNA into the large ribosomal subunit, where it forms part of the central protuberance. In the 70S ribosome it contacts protein S13 of the 30S subunit (bridge B1b), connecting the 2 subunits; this bridge is implicated in subunit movement. Contacts the P site tRNA; the 5S rRNA and some of its associated proteins might help stabilize positioning of ribosome-bound tRNAs. This chain is Large ribosomal subunit protein uL5, found in Alkalilimnicola ehrlichii (strain ATCC BAA-1101 / DSM 17681 / MLHE-1).